The sequence spans 456 residues: Bifunctional protein GlmU (456 aa).

Positions 1 to 229 are pyrophosphorylase; it reads MLNSAMSVVI…ISETDGVNNR (229 aa). UDP-N-acetyl-alpha-D-glucosamine contacts are provided by residues 11–14, K25, Q76, 81–82, 103–105, G140, E154, N169, and N227; these read LAAG, GT, and YGD. D105 contacts Mg(2+). N227 contributes to the Mg(2+) binding site. Residues 230–250 are linker; the sequence is LQLSRLERIYQAEQAEKLLLS. Residues 251–456 form an N-acetyltransferase region; it reads GVMLRDPARF…QGWQRPVKKK (206 aa). R333 and K351 together coordinate UDP-N-acetyl-alpha-D-glucosamine. H363 (proton acceptor) is an active-site residue. UDP-N-acetyl-alpha-D-glucosamine contacts are provided by Y366 and N377. Residues A380, 386–387, S405, A423, and R440 each bind acetyl-CoA; that span reads NY.

In the N-terminal section; belongs to the N-acetylglucosamine-1-phosphate uridyltransferase family. This sequence in the C-terminal section; belongs to the transferase hexapeptide repeat family. As to quaternary structure, homotrimer. It depends on Mg(2+) as a cofactor.

It localises to the cytoplasm. It carries out the reaction alpha-D-glucosamine 1-phosphate + acetyl-CoA = N-acetyl-alpha-D-glucosamine 1-phosphate + CoA + H(+). It catalyses the reaction N-acetyl-alpha-D-glucosamine 1-phosphate + UTP + H(+) = UDP-N-acetyl-alpha-D-glucosamine + diphosphate. It functions in the pathway nucleotide-sugar biosynthesis; UDP-N-acetyl-alpha-D-glucosamine biosynthesis; N-acetyl-alpha-D-glucosamine 1-phosphate from alpha-D-glucosamine 6-phosphate (route II): step 2/2. It participates in nucleotide-sugar biosynthesis; UDP-N-acetyl-alpha-D-glucosamine biosynthesis; UDP-N-acetyl-alpha-D-glucosamine from N-acetyl-alpha-D-glucosamine 1-phosphate: step 1/1. Its pathway is bacterial outer membrane biogenesis; LPS lipid A biosynthesis. Catalyzes the last two sequential reactions in the de novo biosynthetic pathway for UDP-N-acetylglucosamine (UDP-GlcNAc). The C-terminal domain catalyzes the transfer of acetyl group from acetyl coenzyme A to glucosamine-1-phosphate (GlcN-1-P) to produce N-acetylglucosamine-1-phosphate (GlcNAc-1-P), which is converted into UDP-GlcNAc by the transfer of uridine 5-monophosphate (from uridine 5-triphosphate), a reaction catalyzed by the N-terminal domain. The polypeptide is Bifunctional protein GlmU (Salmonella paratyphi A (strain ATCC 9150 / SARB42)).